We begin with the raw amino-acid sequence, 1209 residues long: DNA-directed RNA polymerase subunit beta (1209 aa).

Over residues 1173–1192 (QQEKKKLAEEAAKKDDKPDE) the composition is skewed to basic and acidic residues. The tract at residues 1173 to 1209 (QQEKKKLAEEAAKKDDKPDEPVDESDSSTSSDDKVSK) is disordered.

This sequence belongs to the RNA polymerase beta chain family. In terms of assembly, the RNAP catalytic core consists of 2 alpha, 1 beta, 1 beta' and 1 omega subunit. When a sigma factor is associated with the core the holoenzyme is formed, which can initiate transcription.

It catalyses the reaction RNA(n) + a ribonucleoside 5'-triphosphate = RNA(n+1) + diphosphate. In terms of biological role, DNA-dependent RNA polymerase catalyzes the transcription of DNA into RNA using the four ribonucleoside triphosphates as substrates. This Lactobacillus johnsonii (strain CNCM I-12250 / La1 / NCC 533) protein is DNA-directed RNA polymerase subunit beta.